Here is a 510-residue protein sequence, read N- to C-terminus: 2,3-bisphosphoglycerate-independent phosphoglycerate mutase (510 aa).

Mn(2+) contacts are provided by Asp-13 and Ser-63. Ser-63 serves as the catalytic Phosphoserine intermediate. Substrate-binding positions include His-124, 154-155, Arg-186, Arg-192, 262-265, and Lys-334; these read RD and RADR. Mn(2+)-binding residues include Asp-401, His-405, Asp-442, His-443, and His-461.

This sequence belongs to the BPG-independent phosphoglycerate mutase family. In terms of assembly, monomer. Requires Mn(2+) as cofactor.

The enzyme catalyses (2R)-2-phosphoglycerate = (2R)-3-phosphoglycerate. It participates in carbohydrate degradation; glycolysis; pyruvate from D-glyceraldehyde 3-phosphate: step 3/5. In terms of biological role, catalyzes the interconversion of 2-phosphoglycerate and 3-phosphoglycerate. The protein is 2,3-bisphosphoglycerate-independent phosphoglycerate mutase of Aliivibrio fischeri (strain MJ11) (Vibrio fischeri).